A 364-amino-acid chain; its full sequence is Protein leg1b (364 aa).

An N-terminal signal peptide occupies residues 1 to 22; that stretch reads MSEMGFLRSVAAVLLLAVFSHA. Residue N70 is glycosylated (N-linked (GlcNAc...) asparagine).

Belongs to the LEG1 family. As to expression, detected in all tissues tested, with the highest levels in serum (at protein level). At mRNA level, only expressed in liver.

The protein localises to the secreted. In terms of biological role, involved in early development of liver, exocrine pancreas and intestine, probably through cell cycle regulation. In liver, its function is partially redundant with leg1a function. This Danio rerio (Zebrafish) protein is Protein leg1b.